A 411-amino-acid chain; its full sequence is Tyrosine--tRNA ligase (411 aa).

Y34 contributes to the L-tyrosine binding site. Positions 39 to 48 match the 'HIGH' region motif; that stretch reads CTATSLHIGS. Residues Y171 and Q175 each coordinate L-tyrosine. Positions 231-235 match the 'KMSKS' region motif; it reads KMGKT. K234 contacts ATP. One can recognise an S4 RNA-binding domain in the interval 345–411; that stretch reads ISAYELFYEA…GKKRHILVRV (67 aa).

This sequence belongs to the class-I aminoacyl-tRNA synthetase family. TyrS type 1 subfamily. As to quaternary structure, homodimer.

It is found in the cytoplasm. It carries out the reaction tRNA(Tyr) + L-tyrosine + ATP = L-tyrosyl-tRNA(Tyr) + AMP + diphosphate + H(+). Its function is as follows. Catalyzes the attachment of tyrosine to tRNA(Tyr) in a two-step reaction: tyrosine is first activated by ATP to form Tyr-AMP and then transferred to the acceptor end of tRNA(Tyr). In Rickettsia rickettsii (strain Sheila Smith), this protein is Tyrosine--tRNA ligase.